A 204-amino-acid polypeptide reads, in one-letter code: Small ribosomal subunit protein uS4 (204 aa).

Residues 94-157 (RRLDNVVYRL…KKLEVFKENL (64 aa)) form the S4 RNA-binding domain.

This sequence belongs to the universal ribosomal protein uS4 family. As to quaternary structure, part of the 30S ribosomal subunit. Contacts protein S5. The interaction surface between S4 and S5 is involved in control of translational fidelity.

One of the primary rRNA binding proteins, it binds directly to 16S rRNA where it nucleates assembly of the body of the 30S subunit. In terms of biological role, with S5 and S12 plays an important role in translational accuracy. The chain is Small ribosomal subunit protein uS4 from Sulfurihydrogenibium sp. (strain YO3AOP1).